A 114-amino-acid polypeptide reads, in one-letter code: MYYKFSGFTQKLAGAWASEAYSPQGLKPVVSTEAPPIIFATPTKLTSDSTVYDYAGKNKVPELQKFFQKADGVPVYLKRGLPDQMLYRTTMALTVGGTIYCLIALYMASQPKNK.

The transit peptide at 1–55 (MYYKFSGFTQKLAGAWASEAYSPQGLKPVVSTEAPPIIFATPTKLTSDSTVYDYA) directs the protein to the mitochondrion. Residue lysine 69 is modified to N6-acetyllysine. The helical transmembrane segment at 82 to 107 (PDQMLYRTTMALTVGGTIYCLIALYM) threads the bilayer.

This sequence belongs to the cytochrome c oxidase VIIa family. As to quaternary structure, interacts with the mitochondrial respiratory complexes III (CIII) and IV (CIV), promoting their association.

It is found in the mitochondrion inner membrane. Functionally, assembly factor that mediates the formation of some mitochondrial respiratory supercomplexes (respirasomes), thereby promoting oxidative phosphorylation and energy metabolism. Acts as a molecular adapter that associates with both mitochondrial respiratory complexes III (CIII) and IV (CIV), promoting their association. Mediates the formation of various mitochondrial respiratory supercomplexes, such as MCIII(2)IV(2), composed of two CIII and two CIV, and the CS-respirasome (MCI(1)III(2)IV(2)), composed of one CI, two CIII and two CIV. Not involved in the formation of the canonical respirasome (MCI(1)III(2)IV(1)), composed of one CI, two CIII and one CIV. The formation of different respirasomes is important for cell adaptation to oxygen conditions and prevent metabolic exhaustion: supercomplexes mediated by COX7A2L/SCAF1 are required to maintain oxidative phosphorylation upon low oxygen conditions and promote metabolic rewiring toward glycolysis. The chain is Cytochrome c oxidase subunit 7A2-like, mitochondrial from Homo sapiens (Human).